Reading from the N-terminus, the 20-residue chain is Peroxidase 1 (20 aa).

Position 14 (His-14) interacts with heme. Ca(2+) is bound at residue Thr-15.

The protein belongs to the peroxidase family. Classical plant (class III) peroxidase subfamily. It depends on Ca(2+) as a cofactor. Heme b is required as a cofactor.

The protein resides in the secreted. It carries out the reaction 2 a phenolic donor + H2O2 = 2 a phenolic radical donor + 2 H2O. Its function is as follows. Removal of H(2)O(2), oxidation of toxic reductants, biosynthesis and degradation of lignin, suberization, auxin catabolism, response to environmental stresses such as wounding, pathogen attack and oxidative stress. These functions might be dependent on each isozyme/isoform in each plant tissue. The chain is Peroxidase 1 from Betula pendula (European white birch).